Here is a 396-residue protein sequence, read N- to C-terminus: 1-deoxy-D-xylulose 5-phosphate reductoisomerase (396 aa).

4 residues coordinate NADPH: Thr15, Gly16, Ile18, and Asn127. Lys128 is a binding site for 1-deoxy-D-xylulose 5-phosphate. Position 129 (Glu129) interacts with NADPH. Asp153 contributes to the Mn(2+) binding site. The 1-deoxy-D-xylulose 5-phosphate site is built by Ser154, Glu155, Ser177, and His200. Glu155 contributes to the Mn(2+) binding site. NADPH is bound at residue Gly206. Positions 213, 218, 219, and 222 each coordinate 1-deoxy-D-xylulose 5-phosphate. Mn(2+) is bound at residue Glu222.

The protein belongs to the DXR family. Mg(2+) is required as a cofactor. It depends on Mn(2+) as a cofactor.

The catalysed reaction is 2-C-methyl-D-erythritol 4-phosphate + NADP(+) = 1-deoxy-D-xylulose 5-phosphate + NADPH + H(+). Its pathway is isoprenoid biosynthesis; isopentenyl diphosphate biosynthesis via DXP pathway; isopentenyl diphosphate from 1-deoxy-D-xylulose 5-phosphate: step 1/6. In terms of biological role, catalyzes the NADPH-dependent rearrangement and reduction of 1-deoxy-D-xylulose-5-phosphate (DXP) to 2-C-methyl-D-erythritol 4-phosphate (MEP). The chain is 1-deoxy-D-xylulose 5-phosphate reductoisomerase from Anaplasma marginale (strain Florida).